The sequence spans 459 residues: Cysteine--tRNA ligase (459 aa).

Residue C28 participates in Zn(2+) binding. A 'HIGH' region motif is present at residues 30–40 (VTVYDLCHFGH). Zn(2+) contacts are provided by C209, H234, and E238. Residues 266–270 (KMSKS) carry the 'KMSKS' region motif. Residue K269 participates in ATP binding.

The protein belongs to the class-I aminoacyl-tRNA synthetase family. Monomer. Zn(2+) serves as cofactor.

It is found in the cytoplasm. It catalyses the reaction tRNA(Cys) + L-cysteine + ATP = L-cysteinyl-tRNA(Cys) + AMP + diphosphate. In Actinobacillus succinogenes (strain ATCC 55618 / DSM 22257 / CCUG 43843 / 130Z), this protein is Cysteine--tRNA ligase.